The primary structure comprises 234 residues: Orotate phosphoribosyltransferase (234 aa).

Residue Lys-30 participates in 5-phospho-alpha-D-ribose 1-diphosphate binding. 38–39 (FF) contacts orotate. 5-phospho-alpha-D-ribose 1-diphosphate is bound by residues 76–77 (YK), Arg-103, Lys-104, Lys-107, His-109, and 128–136 (DDVITAGTA). Orotate is bound by residues Thr-132 and Arg-160.

Belongs to the purine/pyrimidine phosphoribosyltransferase family. PyrE subfamily. In terms of assembly, homodimer. The cofactor is Mg(2+).

The enzyme catalyses orotidine 5'-phosphate + diphosphate = orotate + 5-phospho-alpha-D-ribose 1-diphosphate. It functions in the pathway pyrimidine metabolism; UMP biosynthesis via de novo pathway; UMP from orotate: step 1/2. Functionally, catalyzes the transfer of a ribosyl phosphate group from 5-phosphoribose 1-diphosphate to orotate, leading to the formation of orotidine monophosphate (OMP). This is Orotate phosphoribosyltransferase from Chromohalobacter salexigens (strain ATCC BAA-138 / DSM 3043 / CIP 106854 / NCIMB 13768 / 1H11).